The primary structure comprises 326 residues: Cytosolic sulfotransferase 7 (326 aa).

Residue 72–77 participates in 3'-phosphoadenylyl sulfate binding; that stretch reads KSGTTW. His138 functions as the Proton acceptor in the catalytic mechanism. Residues Arg160, Ser168, Tyr226, and 292-294 each bind 3'-phosphoadenylyl sulfate; that span reads RKG.

Belongs to the sulfotransferase 1 family.

It is found in the cytoplasm. Functionally, sulfotransferase that utilizes 3'-phospho-5'-adenylyl sulfate (PAPS) as sulfonate donor. The sequence is that of Cytosolic sulfotransferase 7 (SOT7) from Arabidopsis thaliana (Mouse-ear cress).